Reading from the N-terminus, the 294-residue chain is Protease HtpX (294 aa).

2 helical membrane passes run 4-24 and 34-52; these read IALF…VLSL and GLLI…VSLM. His139 lines the Zn(2+) pocket. Glu140 is a catalytic residue. Residue His143 coordinates Zn(2+). 2 helical membrane passes run 158–178 and 194–214; these read VVNT…AGFL and LIYF…ASII. Position 223 (Glu223) interacts with Zn(2+).

It belongs to the peptidase M48B family. Requires Zn(2+) as cofactor.

It is found in the cell inner membrane. This Klebsiella pneumoniae subsp. pneumoniae (strain ATCC 700721 / MGH 78578) protein is Protease HtpX.